Reading from the N-terminus, the 136-residue chain is Globin CTP-III (136 aa).

The 136-residue stretch at 1-136 (LSADQISTVQ…TFFGMIFSKM (136 aa)) folds into the Globin domain. Residue histidine 87 coordinates heme b.

The protein belongs to the globin family. As to quaternary structure, monomer.

The polypeptide is Globin CTP-III (Chironomus thummi piger (Midge)).